Here is a 968-residue protein sequence, read N- to C-terminus: Serine/threonine-protein kinase apg-1 (968 aa).

The region spanning 24-329 is the Protein kinase domain; the sequence is FVIDQEIGKG…FEDLFNHPVV (306 aa). ATP-binding positions include 30 to 38 and K53; that span reads IGKGSFAKV. D167 acts as the Proton acceptor in catalysis. Disordered regions lie at residues 334-500, 528-585, 884-906, and 939-968; these read PGLV…ERAA, MYPQ…LGTS, LPKR…LSDE, and ASKA…SVPA. 3 stretches are compositionally biased toward basic and acidic residues: residues 350–361, 371–380, and 417–431; these read LKEERPVSRAED, LRKDLADREG, and PRED…KEAA. 3 stretches are compositionally biased toward polar residues: residues 441 to 452, 528 to 538, and 545 to 557; these read VQPSTSAPTRPS, MYPQQPQSPKS, and ATQQ…TSGA.

The protein belongs to the protein kinase superfamily. Ser/Thr protein kinase family. APG1/unc-51/ULK1 subfamily. As to quaternary structure, homodimer. Forms a ternary complex with ATG13 and ATG17.

Its subcellular location is the cytoplasm. It is found in the preautophagosomal structure membrane. The enzyme catalyses L-seryl-[protein] + ATP = O-phospho-L-seryl-[protein] + ADP + H(+). It carries out the reaction L-threonyl-[protein] + ATP = O-phospho-L-threonyl-[protein] + ADP + H(+). Its function is as follows. Serine/threonine protein kinase involved in the cytoplasm to vacuole transport (Cvt) and found to be essential in autophagy, where it is required for the formation of autophagosomes. Involved in the clearance of protein aggregates which cannot be efficiently cleared by the proteasome. Required for selective autophagic degradation of the nucleus (nucleophagy) as well as for mitophagy which contributes to regulate mitochondrial quantity and quality by eliminating the mitochondria to a basal level to fulfill cellular energy requirements and preventing excess ROS production. Also involved in endoplasmic reticulum-specific autophagic process, in selective removal of ER-associated degradation (ERAD) substrates. Plays a key role in ATG9 and ATG23 cycling through the pre-autophagosomal structure and is necessary to promote ATG18 binding to ATG9 through phosphorylation of ATG9. Catalyzes phosphorylation of ATG4, decreasing the interaction between ATG4 and ATG8 and impairing deconjugation of PE-conjugated forms of ATG8. The protein is Serine/threonine-protein kinase apg-1 of Neurospora crassa (strain ATCC 24698 / 74-OR23-1A / CBS 708.71 / DSM 1257 / FGSC 987).